The chain runs to 350 residues: uncharacterized protein (350 aa).

Residues Asp214, Asp225, His289, Glu318, and Glu332 each contribute to the Mn(2+) site.

This sequence belongs to the peptidase M24B family. Requires Mn(2+) as cofactor.

This is an uncharacterized protein from Staphylococcus saprophyticus subsp. saprophyticus (strain ATCC 15305 / DSM 20229 / NCIMB 8711 / NCTC 7292 / S-41).